The following is a 420-amino-acid chain: MTLSDTIMEQLEAVRQASRNIVTLSDQNINKVLEDLAGRITSSAQAILEANRKDLEKMERSNPMYDRLLLDEKRLEGIAADMRNVASLPSPLDITLEERTLSSGLSLRKASVPIGVIGIIYEARPNVTFDVFALCLKSGNATVLKGGSDADHSNRAIAELIHTVLQDHGISPDILYLLPSEREAATIMMEAVGKIDMIIPRGSQQLIDHVRNTAKVPVIETGAGIVHTYVDRDADMEMAKAIVLNAKTRRPSVCNALDTLIIHSDRLGDLAELCRPLSEHQVIIFADKRSYLELLPSYPATLLKHAEPEHYGTEFLSLKMSVKTVDTLDEALSHIATYSSRHSEALITRDNAVKAEFFKRVDAAVVYHNASTAFTDGAQFGLGAEIGISTQKLHARGPMALKELTTYKWMIEGDGQTRPL.

Belongs to the gamma-glutamyl phosphate reductase family.

It localises to the cytoplasm. The catalysed reaction is L-glutamate 5-semialdehyde + phosphate + NADP(+) = L-glutamyl 5-phosphate + NADPH + H(+). It functions in the pathway amino-acid biosynthesis; L-proline biosynthesis; L-glutamate 5-semialdehyde from L-glutamate: step 2/2. Its function is as follows. Catalyzes the NADPH-dependent reduction of L-glutamate 5-phosphate into L-glutamate 5-semialdehyde and phosphate. The product spontaneously undergoes cyclization to form 1-pyrroline-5-carboxylate. The protein is Gamma-glutamyl phosphate reductase of Chlorobium luteolum (strain DSM 273 / BCRC 81028 / 2530) (Pelodictyon luteolum).